We begin with the raw amino-acid sequence, 246 residues long: Small ribosomal subunit protein uS2 (246 aa).

The segment at 226–246 (QGEEEAEVAEETAPETETTTA) is disordered. The span at 229-239 (EEAEVAEETAP) shows a compositional bias: acidic residues.

It belongs to the universal ribosomal protein uS2 family. Part of the 30S ribosomal subunit. Interacts with BrxC.

The protein is Small ribosomal subunit protein uS2 (rpsB) of Bacillus subtilis (strain 168).